The following is a 311-amino-acid chain: Malate dehydrogenase (311 aa).

Residues 7-13 (GAAGGIG) and D34 contribute to the NAD(+) site. Substrate contacts are provided by R81 and R87. NAD(+) contacts are provided by residues N94 and 117-119 (ITN). Substrate-binding residues include N119 and R153. H177 (proton acceptor) is an active-site residue. M227 is an NAD(+) binding site.

This sequence belongs to the LDH/MDH superfamily. MDH type 1 family. Homodimer.

The enzyme catalyses (S)-malate + NAD(+) = oxaloacetate + NADH + H(+). Catalyzes the reversible oxidation of malate to oxaloacetate. The sequence is that of Malate dehydrogenase from Aliivibrio fischeri (strain ATCC 700601 / ES114) (Vibrio fischeri).